The chain runs to 190 residues: Holliday junction branch migration complex subunit RuvA (190 aa).

A domain I region spans residues 1-64 (MIGRISGQLA…EDAQILYGFG (64 aa)). The tract at residues 65–137 (SATERAAFRQ…LKGKLGADIG (73 aa)) is domain II. Residues 137–141 (GVQVS) are flexible linker. Residues 142–190 (VSSDSQSDILQALVALGYSDRDAALALKALPKDIGVSDGIKLALKALAK) form a domain III region.

It belongs to the RuvA family. In terms of assembly, homotetramer. Forms an RuvA(8)-RuvB(12)-Holliday junction (HJ) complex. HJ DNA is sandwiched between 2 RuvA tetramers; dsDNA enters through RuvA and exits via RuvB. An RuvB hexamer assembles on each DNA strand where it exits the tetramer. Each RuvB hexamer is contacted by two RuvA subunits (via domain III) on 2 adjacent RuvB subunits; this complex drives branch migration. In the full resolvosome a probable DNA-RuvA(4)-RuvB(12)-RuvC(2) complex forms which resolves the HJ.

The protein resides in the cytoplasm. Its function is as follows. The RuvA-RuvB-RuvC complex processes Holliday junction (HJ) DNA during genetic recombination and DNA repair, while the RuvA-RuvB complex plays an important role in the rescue of blocked DNA replication forks via replication fork reversal (RFR). RuvA specifically binds to HJ cruciform DNA, conferring on it an open structure. The RuvB hexamer acts as an ATP-dependent pump, pulling dsDNA into and through the RuvAB complex. HJ branch migration allows RuvC to scan DNA until it finds its consensus sequence, where it cleaves and resolves the cruciform DNA. The sequence is that of Holliday junction branch migration complex subunit RuvA from Polaromonas sp. (strain JS666 / ATCC BAA-500).